Consider the following 333-residue polypeptide: Protoheme IX farnesyltransferase (333 aa).

7 consecutive transmembrane segments (helical) span residues 63–83 (LACT…LNCI), 109–129 (AAFI…VSGV), 132–152 (LAAG…TAIL), 160–180 (IVIG…AASG), 188–208 (WLFA…ALLL), 245–265 (GFGV…LIPF), and 292–312 (WSIF…LPMA).

This sequence belongs to the UbiA prenyltransferase family. Protoheme IX farnesyltransferase subfamily.

It is found in the cell inner membrane. The catalysed reaction is heme b + (2E,6E)-farnesyl diphosphate + H2O = Fe(II)-heme o + diphosphate. It participates in porphyrin-containing compound metabolism; heme O biosynthesis; heme O from protoheme: step 1/1. Converts heme B (protoheme IX) to heme O by substitution of the vinyl group on carbon 2 of heme B porphyrin ring with a hydroxyethyl farnesyl side group. This chain is Protoheme IX farnesyltransferase, found in Prochlorococcus marinus (strain MIT 9303).